The sequence spans 288 residues: UTP--glucose-1-phosphate uridylyltransferase (288 aa).

Belongs to the UDPGP type 2 family.

The catalysed reaction is alpha-D-glucose 1-phosphate + UTP + H(+) = UDP-alpha-D-glucose + diphosphate. It participates in glycolipid metabolism; diglucosyl-diacylglycerol biosynthesis. Catalyzes the formation of UDP-glucose from glucose-1-phosphate and UTP. This is an intermediate step in the biosynthesis of diglucosyl-diacylglycerol (Glc2-DAG), i.e. the predominant glycolipid found in the S.aureus membrane, which is also used as a membrane anchor for lipoteichoic acid (LTA). The protein is UTP--glucose-1-phosphate uridylyltransferase (gtaB) of Staphylococcus aureus (strain MSSA476).